A 500-amino-acid chain; its full sequence is Probable cytosol aminopeptidase (500 aa).

Mn(2+)-binding residues include Lys-264 and Asp-269. Lys-276 is a catalytic residue. Mn(2+) contacts are provided by Asp-287, Asp-346, and Glu-348. The active site involves Arg-350.

The protein belongs to the peptidase M17 family. Mn(2+) is required as a cofactor.

It localises to the cytoplasm. It carries out the reaction Release of an N-terminal amino acid, Xaa-|-Yaa-, in which Xaa is preferably Leu, but may be other amino acids including Pro although not Arg or Lys, and Yaa may be Pro. Amino acid amides and methyl esters are also readily hydrolyzed, but rates on arylamides are exceedingly low.. The catalysed reaction is Release of an N-terminal amino acid, preferentially leucine, but not glutamic or aspartic acids.. Its function is as follows. Presumably involved in the processing and regular turnover of intracellular proteins. Catalyzes the removal of unsubstituted N-terminal amino acids from various peptides. The sequence is that of Probable cytosol aminopeptidase from Rhodopseudomonas palustris (strain BisB5).